Here is a 156-residue protein sequence, read N- to C-terminus: Small ribosomal subunit protein uS7 (156 aa).

The protein belongs to the universal ribosomal protein uS7 family. Part of the 30S ribosomal subunit. Contacts proteins S9 and S11.

Its function is as follows. One of the primary rRNA binding proteins, it binds directly to 16S rRNA where it nucleates assembly of the head domain of the 30S subunit. Is located at the subunit interface close to the decoding center, probably blocks exit of the E-site tRNA. This chain is Small ribosomal subunit protein uS7, found in Hamiltonella defensa subsp. Acyrthosiphon pisum (strain 5AT).